Consider the following 309-residue polypeptide: Pantothenate kinase (309 aa).

An ATP-binding site is contributed by 92–99 (GSVAVGKT).

It belongs to the prokaryotic pantothenate kinase family.

The protein localises to the cytoplasm. It carries out the reaction (R)-pantothenate + ATP = (R)-4'-phosphopantothenate + ADP + H(+). The protein operates within cofactor biosynthesis; coenzyme A biosynthesis; CoA from (R)-pantothenate: step 1/5. This chain is Pantothenate kinase (coaA), found in Lactiplantibacillus plantarum (strain ATCC BAA-793 / NCIMB 8826 / WCFS1) (Lactobacillus plantarum).